A 61-amino-acid polypeptide reads, in one-letter code: Small ribosomal subunit protein uS14B (61 aa).

Cys24, Cys27, Cys40, and Cys43 together coordinate Zn(2+).

Belongs to the universal ribosomal protein uS14 family. Zinc-binding uS14 subfamily. Part of the 30S ribosomal subunit. Contacts proteins S3 and S10. Zn(2+) is required as a cofactor.

Functionally, binds 16S rRNA, required for the assembly of 30S particles and may also be responsible for determining the conformation of the 16S rRNA at the A site. The sequence is that of Small ribosomal subunit protein uS14B from Cutibacterium acnes (strain DSM 16379 / KPA171202) (Propionibacterium acnes).